The primary structure comprises 68 residues: Protein SlyX homolog (68 aa).

The protein belongs to the SlyX family.

The protein is Protein SlyX homolog of Pseudomonas fluorescens (strain SBW25).